The chain runs to 99 residues: Protein NCBP2AS2 (99 aa).

The tract at residues 76–99 (ELRRGLRGRSGPPPGSQRGPGANI) is disordered.

The chain is Protein NCBP2AS2 from Homo sapiens (Human).